A 465-amino-acid chain; its full sequence is Iron-sulfur cluster assembly SufBD family protein SH2035 (465 aa).

It belongs to the iron-sulfur cluster assembly SufBD family.

This is Iron-sulfur cluster assembly SufBD family protein SH2035 from Staphylococcus haemolyticus (strain JCSC1435).